A 213-amino-acid polypeptide reads, in one-letter code: Adenylate kinase (213 aa).

14 to 19 (GSGKGT) serves as a coordination point for ATP. The segment at 34–63 (SSGELFRSAIDSASPLGIKAAEYINQGLLV) is NMP. AMP contacts are provided by residues serine 35, arginine 40, 61–63 (LLV), 89–92 (GFPR), and glutamine 96. Residues 129–162 (SRFICPSCKHVYNQNQGLSECPTCQMKLVRRSDD) are LID. An ATP-binding site is contributed by arginine 130. Cysteine 133 and cysteine 136 together coordinate Zn(2+). Residue 139-140 (VY) participates in ATP binding. The Zn(2+) site is built by cysteine 149 and cysteine 152. Arginine 159 and arginine 170 together coordinate AMP. Position 198 (alanine 198) interacts with ATP.

The protein belongs to the adenylate kinase family. In terms of assembly, monomer.

Its subcellular location is the cytoplasm. The catalysed reaction is AMP + ATP = 2 ADP. It functions in the pathway purine metabolism; AMP biosynthesis via salvage pathway; AMP from ADP: step 1/1. In terms of biological role, catalyzes the reversible transfer of the terminal phosphate group between ATP and AMP. Plays an important role in cellular energy homeostasis and in adenine nucleotide metabolism. The polypeptide is Adenylate kinase (Chlamydia abortus (strain DSM 27085 / S26/3) (Chlamydophila abortus)).